Here is a 266-residue protein sequence, read N- to C-terminus: MAPSKWDDEEESVSPPPVVARRKFDDEEEEDVLDSWDAAEDSEVEREKAAKAAEAKAKAEAEAAANKKSKAQRIQEKKAQRKADADAEDSDDSDEDEAERRARLRKTEKDADLKHAEDLFGDIDLNRMRNRSAPKAVVISDGTDPTQAVDLSAMPLFKPATKDQFTRVTTTLIPLLTTQSKKPQYALWAQDFIKQLVKDLPSGDVKKIASSLTTLSNEKMKEERAADKGNKKTKAAKTKVSLVTSRENKIETNSYDDDGLDDDDFM.

Disordered stretches follow at residues 1 to 111 (MAPS…EKDA) and 217 to 266 (NEKM…DDFM). A compositionally biased stretch (acidic residues) spans 26–44 (DEEEEDVLDSWDAAEDSEV). The stretch at 40-82 (EDSEVEREKAAKAAEAKAKAEAEAAANKKSKAQRIQEKKAQRK) forms a coiled coil. Composition is skewed to basic and acidic residues over residues 45–61 (EREK…KAEA) and 73–85 (RIQE…KADA). Over residues 86–97 (DAEDSDDSDEDE) the composition is skewed to acidic residues. Basic and acidic residues-rich tracts occupy residues 98–111 (AERR…EKDA) and 218–230 (EKMK…DKGN). Acidic residues predominate over residues 254–266 (SYDDDGLDDDDFM).

This sequence belongs to the eIF-3 subunit J family. Component of the eukaryotic translation initiation factor 3 (eIF-3) complex.

The protein localises to the cytoplasm. In terms of biological role, component of the eukaryotic translation initiation factor 3 (eIF-3) complex, which is involved in protein synthesis of a specialized repertoire of mRNAs and, together with other initiation factors, stimulates binding of mRNA and methionyl-tRNAi to the 40S ribosome. The eIF-3 complex specifically targets and initiates translation of a subset of mRNAs involved in cell proliferation. This chain is Eukaryotic translation initiation factor 3 subunit J (hcr1), found in Aspergillus niger (strain ATCC MYA-4892 / CBS 513.88 / FGSC A1513).